Here is a 42-residue protein sequence, read N- to C-terminus: Daisho1 (42 aa).

The N-terminal stretch at 1–20 is a signal peptide; that stretch reads MKFFQAAALLLAMFAALANA. Residues 21–26 constitute a propeptide, removed by a dipeptidylpeptidase; sequence EPVPQP. Residue threonine 41 is modified to Threonine amide.

In terms of tissue distribution, hemolymph (at protein level).

The protein localises to the secreted. Its function is as follows. Peptide which plays a role in the humoral immune response to a subset of filamentous fungi, including F.oxysporum and F.verticillioides. The sequence is that of Daisho1 from Drosophila melanogaster (Fruit fly).